Reading from the N-terminus, the 342-residue chain is N-acetyl-gamma-glutamyl-phosphate reductase (342 aa).

Residue cysteine 149 is part of the active site.

Belongs to the NAGSA dehydrogenase family. Type 1 subfamily.

The protein resides in the cytoplasm. It carries out the reaction N-acetyl-L-glutamate 5-semialdehyde + phosphate + NADP(+) = N-acetyl-L-glutamyl 5-phosphate + NADPH + H(+). It participates in amino-acid biosynthesis; L-arginine biosynthesis; N(2)-acetyl-L-ornithine from L-glutamate: step 3/4. In terms of biological role, catalyzes the NADPH-dependent reduction of N-acetyl-5-glutamyl phosphate to yield N-acetyl-L-glutamate 5-semialdehyde. The protein is N-acetyl-gamma-glutamyl-phosphate reductase of Nitrosospira multiformis (strain ATCC 25196 / NCIMB 11849 / C 71).